We begin with the raw amino-acid sequence, 382 residues long: MNEVYVFTSESVSEGHPDKIADQISDAILDAILAQDPKARVACEVLVKTGMVLVGGEITTKAWVDVEEITRHVIKDIGYNSSQMGFDWESCAVLSAIGKQSPDIAQGVDNQQTKILGAGDQGLMFGYASRETDVFMPAPIAYAHRLMEKLAKARKSGQLPWLRPDAKCQLTLKYEQGMPVEVDTVVFSTQHSPDIEHKDLVEAIREEIIKSVLPAEWLNDKTRYFINPTGRFVIGGPLGDCGLTGRKIIVDTYGGMARHGGGCFSGKDPSKVDRSAAYAARHVAKNIVAAGLADKCELQISYAIGVAEPTSIFVDTFGTGRLKNSEIIDLIHTHFDLTPQGIIDQHDLLRPIYRQTATYGHYGRENFPWERLDKVAELSKAL.

His16 serves as a coordination point for ATP. Asp18 is a binding site for Mg(2+). Residue Glu44 participates in K(+) binding. L-methionine-binding residues include Glu57 and Gln100. Residues 100–110 (QSPDIAQGVDN) form a flexible loop region. Residues 165-167 (DAK), 231-232 (RF), Asp240, 246-247 (RK), and Lys267 contribute to the ATP site. Asp240 contacts L-methionine. Position 271 (Lys271) interacts with L-methionine.

The protein belongs to the AdoMet synthase family. As to quaternary structure, homotetramer; dimer of dimers. The cofactor is Mg(2+). Requires K(+) as cofactor.

It localises to the cytoplasm. The enzyme catalyses L-methionine + ATP + H2O = S-adenosyl-L-methionine + phosphate + diphosphate. The protein operates within amino-acid biosynthesis; S-adenosyl-L-methionine biosynthesis; S-adenosyl-L-methionine from L-methionine: step 1/1. Its function is as follows. Catalyzes the formation of S-adenosylmethionine (AdoMet) from methionine and ATP. The overall synthetic reaction is composed of two sequential steps, AdoMet formation and the subsequent tripolyphosphate hydrolysis which occurs prior to release of AdoMet from the enzyme. The chain is S-adenosylmethionine synthase from Legionella pneumophila (strain Paris).